A 502-amino-acid chain; its full sequence is Hexokinase-4 (502 aa).

A helical membrane pass occupies residues 4–24 (VLVMLTAAAAVVACSVATVMV). Residues 35–491 (RRVVGLLKDL…SSIGSALLLA (457 aa)) enclose the Hexokinase domain. Positions 90-228 (NGSETGTYYA…GLDIRVAALV (139 aa)) are hexokinase small subdomain. 2 residues coordinate ADP: G104 and S105. D-glucose contacts are provided by T194, K195, N229, and D230. Positions 229–480 (NDTVGALSFG…QHVVVKAMED (252 aa)) are hexokinase large subdomain. Position 253 (T253) interacts with ADP. N256, E284, and E315 together coordinate D-glucose. G445 lines the ADP pocket.

This sequence belongs to the hexokinase family.

It is found in the mitochondrion outer membrane. It carries out the reaction a D-hexose + ATP = a D-hexose 6-phosphate + ADP + H(+). The catalysed reaction is D-fructose + ATP = D-fructose 6-phosphate + ADP + H(+). The enzyme catalyses D-glucose + ATP = D-glucose 6-phosphate + ADP + H(+). The protein operates within carbohydrate metabolism; hexose metabolism. Its pathway is carbohydrate degradation; glycolysis; D-glyceraldehyde 3-phosphate and glycerone phosphate from D-glucose: step 1/4. Its function is as follows. Fructose and glucose phosphorylating enzyme. May be involved in the phosphorylation of glucose during the export from mitochondrion to cytosol. This is Hexokinase-4 from Arabidopsis thaliana (Mouse-ear cress).